A 127-amino-acid polypeptide reads, in one-letter code: Aspartate 1-decarboxylase (127 aa).

Ser25 acts as the Schiff-base intermediate with substrate; via pyruvic acid in catalysis. Ser25 carries the post-translational modification Pyruvic acid (Ser). Thr57 contacts substrate. Residue Tyr58 is the Proton donor of the active site. Substrate is bound at residue 73-75; it reads GAA.

This sequence belongs to the PanD family. Heterooctamer of four alpha and four beta subunits. The cofactor is pyruvate. Is synthesized initially as an inactive proenzyme, which is activated by self-cleavage at a specific serine bond to produce a beta-subunit with a hydroxyl group at its C-terminus and an alpha-subunit with a pyruvoyl group at its N-terminus.

It localises to the cytoplasm. It carries out the reaction L-aspartate + H(+) = beta-alanine + CO2. It participates in cofactor biosynthesis; (R)-pantothenate biosynthesis; beta-alanine from L-aspartate: step 1/1. Functionally, catalyzes the pyruvoyl-dependent decarboxylation of aspartate to produce beta-alanine. The protein is Aspartate 1-decarboxylase of Bacillus pumilus (strain SAFR-032).